The chain runs to 463 residues: MTSETRTLYSQLPAIDRLLHDSAFLSLRDRYGHTQVVDLLRRMLDDARDVIRNTQTLPDWYADWAQEAKLRLENAAQSALRPVINLTGTVLHTNLGRALQAQEAIEAVTQAMRAPVTLEYDLDGAGRGHRDRALATLLCRITGAEDACIVNNNAAAVLLMLAATASGKEVVVSRGELVEIGGAFRIPDVMRQAGCTLHEVGTTNRTHAKDYRQAVNENTGLLMKVHTSNYSIEGFTKTVEEAELAEIGRELDIPVVADLGSGSLVDLSQYGLPKEPMPQQLIAAGVSLVSFSGDKLLGGPQAGIIVGKKAMIAQLQSHPLKRALRADKMTLAALEATLRLYLHPEALAEKLPTLRLLTRSEASIREQAQRLQARLAARYGDEFALEVKPCLSQIGSGSLPVDRLPSAAMTFTPHDGRGSRLEALAARWRTLPVPVIGRIYDGRLWLDMRCLEDESRFMEMMLK.

The residue at position 295 (K295) is an N6-(pyridoxal phosphate)lysine.

This sequence belongs to the SelA family. In terms of assembly, homodecamer; pentamer of dimers. Binds only one seryl-tRNA(Sec) per dimer. It depends on pyridoxal 5'-phosphate as a cofactor.

Its subcellular location is the cytoplasm. The catalysed reaction is L-seryl-tRNA(Sec) + selenophosphate + H(+) = L-selenocysteinyl-tRNA(Sec) + phosphate. It participates in aminoacyl-tRNA biosynthesis; selenocysteinyl-tRNA(Sec) biosynthesis; selenocysteinyl-tRNA(Sec) from L-seryl-tRNA(Sec) (bacterial route): step 1/1. In terms of biological role, converts seryl-tRNA(Sec) to selenocysteinyl-tRNA(Sec) required for selenoprotein biosynthesis. The chain is L-seryl-tRNA(Sec) selenium transferase from Salmonella schwarzengrund (strain CVM19633).